A 416-amino-acid chain; its full sequence is MANDLFNSFMSGPDEQGRFGIFGGRFVSETLMPLILSLEEEYEKAKTDPSFWAEMDDLWTNYVGRPSPLYFAERLTEHLGGAKVYMKRDELNHTGAHKINNVLGQIILARRMGKTRIIAETGAGQHGVATATVCAKFGLKCVVYMGAHDVRRQAPNVFRMRLLGAEVIPVTSGRGTLKDAMNDALRDWVTNVRDTFYCIGTVAGPHPYPAMVRDFQSIIGKEAKEQMMKAEGRLPDTIIAAIGGGSNAMGLFYPFLDDTSVNIIGVEAGGKGVNEKMEHCASLTGGRPGVLHGNRTYLLQDDDGQILEGYSISAGLDYPGIGPEHSWLHEVGRAKYVSITDMEALEAFKLCCATEGIIPALEPSHALAHVMKLAPELPKDHIIIMNMCGRGDKDIFTVAKFLGFDMSDTEGRDAED.

Lys98 bears the N6-(pyridoxal phosphate)lysine mark.

This sequence belongs to the TrpB family. Tetramer of two alpha and two beta chains. The cofactor is pyridoxal 5'-phosphate.

The enzyme catalyses (1S,2R)-1-C-(indol-3-yl)glycerol 3-phosphate + L-serine = D-glyceraldehyde 3-phosphate + L-tryptophan + H2O. It participates in amino-acid biosynthesis; L-tryptophan biosynthesis; L-tryptophan from chorismate: step 5/5. The beta subunit is responsible for the synthesis of L-tryptophan from indole and L-serine. This is Tryptophan synthase beta chain from Ruegeria pomeroyi (strain ATCC 700808 / DSM 15171 / DSS-3) (Silicibacter pomeroyi).